The sequence spans 565 residues: Peptide transport periplasmic protein SapA (565 aa).

The first 23 residues, 1–23 (MLRLNLRFLSFLLCIIQSVELQA), serve as a signal peptide directing secretion.

This sequence belongs to the bacterial solute-binding protein 5 family.

The protein localises to the periplasm. In terms of biological role, involved in a peptide intake transport system that plays a role in the resistance to antimicrobial peptides. In Haemophilus influenzae (strain ATCC 51907 / DSM 11121 / KW20 / Rd), this protein is Peptide transport periplasmic protein SapA (sapA).